Here is a 124-residue protein sequence, read N- to C-terminus: Conotoxin Cl14.12 (124 aa).

The first 17 residues, 1-17, serve as a signal peptide directing secretion; the sequence is MKVAVVLLVSLLAVTYA. Residues 18-74 constitute a propeptide that is removed on maturation; it reads LPEKRIFFGGIVDKVKDTFTKIFNKAKETFDKITDGFDVDFDEVVDKLIAQIHSTPT.

Post-translationally, contains 2 disulfide bond. Expressed by the venom duct.

Its subcellular location is the secreted. The polypeptide is Conotoxin Cl14.12 (Californiconus californicus (California cone)).